The primary structure comprises 274 residues: Probable eukaryotic translation initiation factor 3 subunit J (274 aa).

Disordered regions lie at residues 1 to 110 and 207 to 245; these read MDSW…KEAM and KEQQ…NVNS. The span at 38–47 shows a compositional bias: acidic residues; that stretch reads DEEDEDEEEN. Over residues 52 to 73 the composition is skewed to low complexity; it reads QNDSHSVSQKSSSSSQNDQGSN. Over residues 82–110 the composition is skewed to basic and acidic residues; sequence IQERNFEKAIKASEAAAKEESLESSKEAM. The span at 219 to 234 shows a compositional bias: low complexity; the sequence is AAAPAAKPVSTAAPSK.

The protein belongs to the eIF-3 subunit J family. As to quaternary structure, component of the eukaryotic translation initiation factor 3 (eIF-3) complex. The eIF-3 complex appears to include tif32/eif3a, SPAC25G10.08/eif3b, tif33/eif3c, SPBC4C3.07/eif3f, tif35/eif3g and sum1/eif3i. This set of common subunits may also associate exclusively with either moe1/eif3d and int6/eif3e, or with SPAC821.05/eif3h and SPAC1751.03/eif3m. The eIF-3 complex may also include SPAC3A12.13c/eif3j. Interacts with sad1.

It localises to the cytoplasm. Component of the eukaryotic translation initiation factor 3 (eIF-3) complex, which is involved in protein synthesis of a specialized repertoire of mRNAs and, together with other initiation factors, stimulates binding of mRNA and methionyl-tRNAi to the 40S ribosome. The eIF-3 complex specifically targets and initiates translation of a subset of mRNAs involved in cell proliferation. This Schizosaccharomyces pombe (strain 972 / ATCC 24843) (Fission yeast) protein is Probable eukaryotic translation initiation factor 3 subunit J.